The sequence spans 103 residues: Integration host factor subunit alpha (103 aa).

This sequence belongs to the bacterial histone-like protein family. In terms of assembly, heterodimer of an alpha and a beta chain.

This protein is one of the two subunits of integration host factor, a specific DNA-binding protein that functions in genetic recombination as well as in transcriptional and translational control. This is Integration host factor subunit alpha from Aromatoleum aromaticum (strain DSM 19018 / LMG 30748 / EbN1) (Azoarcus sp. (strain EbN1)).